We begin with the raw amino-acid sequence, 266 residues long: Ribosomal RNA small subunit methyltransferase A (266 aa).

S-adenosyl-L-methionine contacts are provided by Asn10, Ile12, Gly37, Glu58, Asp82, and Asn105.

The protein belongs to the class I-like SAM-binding methyltransferase superfamily. rRNA adenine N(6)-methyltransferase family. RsmA subfamily.

It localises to the cytoplasm. The catalysed reaction is adenosine(1518)/adenosine(1519) in 16S rRNA + 4 S-adenosyl-L-methionine = N(6)-dimethyladenosine(1518)/N(6)-dimethyladenosine(1519) in 16S rRNA + 4 S-adenosyl-L-homocysteine + 4 H(+). Functionally, specifically dimethylates two adjacent adenosines (A1518 and A1519) in the loop of a conserved hairpin near the 3'-end of 16S rRNA in the 30S particle. May play a critical role in biogenesis of 30S subunits. This Mycoplasma mycoides subsp. mycoides SC (strain CCUG 32753 / NCTC 10114 / PG1) protein is Ribosomal RNA small subunit methyltransferase A.